We begin with the raw amino-acid sequence, 249 residues long: Acidic leucine-rich nuclear phosphoprotein 32 family member A (249 aa).

Threonine 15 is subject to Phosphothreonine. Serine 17 bears the Phosphoserine mark. 4 LRR repeats span residues 18–41 (DVKE…TDEF), 43–64 (ELEF…PKLN), 65–87 (KLKK…AEKC), and 89–110 (NLTH…EPLK). An LRRCT domain is found at 123–161 (CEVTNLNDYRENVFKLLPQLTYLDGYDRDDKEAPDSDAE). The span at 147-156 (GYDRDDKEAP) shows a compositional bias: basic and acidic residues. The disordered stretch occupies residues 147–249 (GYDRDDKEAP…EPXDXGEDDD (103 aa)). The segment at 150–174 (RDDKEAPDSDAEGYVEGLDDDEEDE) is necessary for tumor-suppressive function. A compositionally biased stretch (acidic residues) spans 157–230 (DSDAEGYVEG…DEEDEEDVGE (74 aa)). Phosphoserine occurs at positions 158 and 204. Positions 165–249 (EGLDDDEEDE…EPXDXGEDDD (85 aa)) are interaction with E4F1.

This sequence belongs to the ANP32 family. As to quaternary structure, component of the SET complex, composed of at least ANP32A, APEX1, HMGB2, NME1, SET and TREX1. Directly interacts with SET. Interacts with ATXN1/SCA1. Interacts with MAP1B. Interacts with ELAVL1. Part of the INHAT (inhibitor of histone acetyltransferases) complex. Interacts with E4F1. Post-translationally, phosphorylated on serine residues, at least in part by casein kinase 2/CK2. In terms of processing, some glutamate residues are glycylated by TTLL8. This modification occurs exclusively on glutamate residues and results in a glycine chain on the gamma-carboxyl group.

It localises to the nucleus. The protein resides in the cytoplasm. It is found in the endoplasmic reticulum. Functionally, multifunctional protein that is involved in the regulation of many processes including tumor suppression, apoptosis, cell cycle progression or transcription. Promotes apoptosis by favouring the activation of caspase-9/CASP9 and allowing apoptosome formation. In addition, plays a role in the modulation of histone acetylation and transcription as part of the INHAT (inhibitor of histone acetyltransferases) complex. Inhibits the histone-acetyltranferase activity of EP300/CREBBP (CREB-binding protein) and EP300/CREBBP-associated factor by histone masking. Preferentially binds to unmodified histone H3 and sterically inhibiting its acetylation and phosphorylation leading to cell growth inhibition. Participates in other biochemical processes such as regulation of mRNA nuclear-to-cytoplasmic translocation and stability by its association with ELAVL1 (Hu-antigen R). Plays a role in E4F1-mediated transcriptional repression as well as inhibition of protein phosphatase 2A. The polypeptide is Acidic leucine-rich nuclear phosphoprotein 32 family member A (ANP32A) (Canis lupus familiaris (Dog)).